Reading from the N-terminus, the 246-residue chain is Phycocyanobilin:ferredoxin oxidoreductase (246 aa).

The protein belongs to the HY2 family.

The enzyme catalyses (2R,3Z)-phycocyanobilin + 4 oxidized [2Fe-2S]-[ferredoxin] = biliverdin IXalpha + 4 reduced [2Fe-2S]-[ferredoxin] + 4 H(+). In terms of biological role, catalyzes the four-electron reduction of biliverdin IX-alpha (2-electron reduction at both the A and D rings); the reaction proceeds via an isolatable 2-electron intermediate, 181,182-dihydrobiliverdin. This Synechococcus sp. (strain CC9902) protein is Phycocyanobilin:ferredoxin oxidoreductase.